Consider the following 304-residue polypeptide: Porphobilinogen deaminase (304 aa).

Position 241 is an S-(dipyrrolylmethanemethyl)cysteine (Cys241).

Belongs to the HMBS family. As to quaternary structure, monomer. Dipyrromethane is required as a cofactor.

It carries out the reaction 4 porphobilinogen + H2O = hydroxymethylbilane + 4 NH4(+). It functions in the pathway porphyrin-containing compound metabolism; protoporphyrin-IX biosynthesis; coproporphyrinogen-III from 5-aminolevulinate: step 2/4. Its function is as follows. Tetrapolymerization of the monopyrrole PBG into the hydroxymethylbilane pre-uroporphyrinogen in several discrete steps. The chain is Porphobilinogen deaminase from Ruthia magnifica subsp. Calyptogena magnifica.